An 88-amino-acid chain; its full sequence is Stannin (88 aa).

The Mitochondrial intermembrane segment spans residues 1-10; that stretch reads MSIMDHSPTT. Residues 11–31 traverse the membrane as a helical segment; that stretch reads GVVTVIVILIAIAALGALILG. Residues 32-88 lie on the Cytoplasmic side of the membrane; that stretch reads CWCYLRLQRISQSEDEESIVGDGETKEPFLLVQYSAKGPCVERKAKLMTANSPEVHG. A phosphoserine mark is found at S49 and S83.

Belongs to the stannin family. Monomer.

The protein resides in the mitochondrion outer membrane. Functionally, plays a role in the toxic effects of organotins. Plays a role in endosomal maturation. This chain is Stannin (Snn), found in Mus musculus (Mouse).